The following is a 490-amino-acid chain: Secretory immunoglobulin A-binding protein EsiB (490 aa).

The N-terminal stretch at 1–23 (MKKSLLAVMLTGLFALVSLPALG) is a signal peptide. Sel1-like repeat units lie at residues 39–74 (AKAQLELGYRYFQGNETTKDLTQAMDWFRRAAEQGY), 77–109 (AEYVLGLRYMNGEGVPQDYAQAVIWYKKAALKG), 111–145 (PQAQQNLGVMYHEGNGVKVDKAESVKWFRLAAEQG), 153–182 (MGDAYFEGDGVTRDYVMAREWYSKAAEQGN), 185–218 (SCNQLGYMYSRGLGVERNDAISAQWYRKSATSGD), 222–254 (QLHLADMYYFGIGVTQDYTQSRVLFSQSAEQGN), 256–290 (IAQFRLGYILEQGLAGAKEPLKALEWYRKSAEQGN), 291–327 (SDGQYYLAHLYDKGAEGVAKNREQAISWYTKSAEQGD), 328–361 (ATAQANLGAIYFRLGSEEEHKKAVEWFRKAAAKG), 364–397 (AAQFNLGNALLQGKGVKKDEQQAAIWMRKAAEQG), and 399–430 (SAAQVQLGEIYYYGLGVERDYVQAWAWFDTAS). Residues His122, Glu159, and Asp161 each coordinate Mg(2+).

Interacts with human secreted IgA (SIgA) at least via resides 244-260. Requires Mg(2+) as cofactor.

It is found in the cell surface. Functionally, upon host (human neutrophil) infection interferes with productive FCAR signaling, inhibiting secreted IgA (SIgA) effector functions and probably avoiding neutrophil activation. Inhibits the SIgA-mediated oxidative burst by neutrophils, decreases generation of ROS (reactive oxygen species) by neutrophils and reduces chemotaxis by neutrophils, all of which are SIgA effector functions used to stimulate the immune response. Does not block SIgA-binding to its receptor (FCAR) on neutrophils, but it decreases SIgA-stimulated phosphorylation of cytoplasmic proteins, including phospholipase C-gamma and MAP kinases, all actions that may be advantageous to the pathogen. The polypeptide is Secretory immunoglobulin A-binding protein EsiB (Escherichia coli O6:H1 (strain CFT073 / ATCC 700928 / UPEC)).